Here is a 147-residue protein sequence, read N- to C-terminus: Large ribosomal subunit protein bL9 (147 aa).

It belongs to the bacterial ribosomal protein bL9 family.

Its function is as follows. Binds to the 23S rRNA. The polypeptide is Large ribosomal subunit protein bL9 (Clostridium botulinum (strain ATCC 19397 / Type A)).